Here is a 433-residue protein sequence, read N- to C-terminus: Histidinol dehydrogenase (433 aa).

Tyr130, Gln191, and Asn214 together coordinate NAD(+). Substrate-binding residues include Ser237, Gln259, and His262. Zn(2+)-binding residues include Gln259 and His262. Catalysis depends on proton acceptor residues Glu327 and His328. Residues His328, Asp361, Glu415, and His420 each coordinate substrate. Asp361 contributes to the Zn(2+) binding site. His420 provides a ligand contact to Zn(2+).

The protein belongs to the histidinol dehydrogenase family. It depends on Zn(2+) as a cofactor.

The enzyme catalyses L-histidinol + 2 NAD(+) + H2O = L-histidine + 2 NADH + 3 H(+). It functions in the pathway amino-acid biosynthesis; L-histidine biosynthesis; L-histidine from 5-phospho-alpha-D-ribose 1-diphosphate: step 9/9. Its function is as follows. Catalyzes the sequential NAD-dependent oxidations of L-histidinol to L-histidinaldehyde and then to L-histidine. The sequence is that of Histidinol dehydrogenase from Ruegeria pomeroyi (strain ATCC 700808 / DSM 15171 / DSS-3) (Silicibacter pomeroyi).